The sequence spans 429 residues: Putative F-box/kelch-repeat protein At2g21680 (429 aa).

A disordered region spans residues 1 to 32 (MVLISETSDDGSTGGDHQIKKPKKEEDRNKKL). Basic and acidic residues predominate over residues 17–29 (HQIKKPKKEEDRN). The F-box domain maps to 37 to 84 (QVSLPIPEELILRCFLLVRRCHHPSLSLVCRSFHSLMSKLYDDRLRLG). Kelch repeat units follow at residues 144-175 (DIYVIGGRVGEKLLEDVGVGYNKPISGGRRGE), 176-221 (TSIR…VIDG), 222-267 (KIYV…LTYA), 269-313 (MKEK…VVDN), and 315-359 (LFCI…DGYK).

In Arabidopsis thaliana (Mouse-ear cress), this protein is Putative F-box/kelch-repeat protein At2g21680.